The sequence spans 322 residues: MGERFKDPAKNFVCSFLNCKASFSKAWKLEAHYCKHTGLRPFACDRCDKTFCTRCQLTRHNLSHSGKKPYQCLEDGCSESFISTAGLKNHVERVHQHKEKHYVCDYEGCAKEFRKKKQLRSHKCEHMNQLPFECQYEGCGKKYTTSKKLQKHEKVHDVYPCAEEGCDFQGRMWTEYQAHRKAAHREALQCDSCAKVFHKAWFLKKHKLFVHLGVRRVFKCTKEGCQKTYTTHFNLQNHILSFHEGIRSFICPHDGCGKAFAMEGSLKRHAVVHDPQKKKLQKKTKRGRKKKLEPKTNVSDDSELPAQLHGLSLNTSTSQNNP.

9 consecutive C2H2-type zinc fingers follow at residues 12–36 (FVCS…YCKH), 42–64 (FACD…NLSH), 70–95 (YQCL…ERVH), 102–126 (YVCD…KCEH), 132–156 (FECQ…EKVH), 159–184 (YPCA…KAAH), 188–211 (LQCD…LFVH), 218–243 (FKCT…LSFH), and 249–273 (FICP…AVVH). Residues 272–322 (VHDPQKKKLQKKTKRGRKKKLEPKTNVSDDSELPAQLHGLSLNTSTSQNNP) are disordered. The segment covering 278–292 (KKLQKKTKRGRKKKL) has biased composition (basic residues). Positions 312–322 (SLNTSTSQNNP) are enriched in polar residues.

Its subcellular location is the nucleus. Its function is as follows. Involved in ribosomal large subunit biogenesis. Interacts with the internal control region (ICR) of approximately 50 bases within the 5S RNA genes, is required for correct transcription of these genes by RNA polymerase III. Also binds the transcribed 5S RNA's. This chain is Transcription factor IIIA (gtf3a), found in Ictalurus punctatus (Channel catfish).